A 141-amino-acid chain; its full sequence is Phosphoribosyl-AMP cyclohydrolase (141 aa).

Mg(2+) is bound at residue Asp88. Residue Cys89 participates in Zn(2+) binding. Residues Asp90 and Asp92 each coordinate Mg(2+). Zn(2+) is bound by residues Cys109 and Cys116.

Belongs to the PRA-CH family. Homodimer. It depends on Mg(2+) as a cofactor. Requires Zn(2+) as cofactor.

Its subcellular location is the cytoplasm. The catalysed reaction is 1-(5-phospho-beta-D-ribosyl)-5'-AMP + H2O = 1-(5-phospho-beta-D-ribosyl)-5-[(5-phospho-beta-D-ribosylamino)methylideneamino]imidazole-4-carboxamide. It functions in the pathway amino-acid biosynthesis; L-histidine biosynthesis; L-histidine from 5-phospho-alpha-D-ribose 1-diphosphate: step 3/9. In terms of biological role, catalyzes the hydrolysis of the adenine ring of phosphoribosyl-AMP. The polypeptide is Phosphoribosyl-AMP cyclohydrolase (Paracidovorax citrulli (strain AAC00-1) (Acidovorax citrulli)).